Reading from the N-terminus, the 616-residue chain is Methylmalonyl-CoA mutase small subunit (616 aa).

The protein belongs to the methylmalonyl-CoA mutase family. Heterodimer of an alpha and a beta chain. Requires adenosylcob(III)alamin as cofactor.

The catalysed reaction is (R)-methylmalonyl-CoA = succinyl-CoA. It functions in the pathway metabolic intermediate metabolism; propanoyl-CoA degradation; succinyl-CoA from propanoyl-CoA: step 3/3. In terms of biological role, catalyzes the isomerization of succinyl-CoA to methylmalonyl-CoA during synthesis of propionate from tricarboxylic acid-cycle intermediates. This conversion most likely represents an important source of building blocks for polyketide antibiotic biosynthesis. It is unable to catalyze the conversion of isobutyryl-CoA into N-butyryl-CoA. This chain is Methylmalonyl-CoA mutase small subunit (mutA), found in Streptomyces virginiae (Streptomyces cinnamonensis).